The primary structure comprises 359 residues: tRNA/tmRNA (uracil-C(5))-methyltransferase (359 aa).

Residues Gln-183, Tyr-211, Asn-216, Glu-232, and Asp-292 each coordinate S-adenosyl-L-methionine. Residue Cys-317 is the Nucleophile of the active site. Residue Glu-351 is the Proton acceptor of the active site.

Belongs to the class I-like SAM-binding methyltransferase superfamily. RNA M5U methyltransferase family. TrmA subfamily.

The catalysed reaction is uridine(54) in tRNA + S-adenosyl-L-methionine = 5-methyluridine(54) in tRNA + S-adenosyl-L-homocysteine + H(+). The enzyme catalyses uridine(341) in tmRNA + S-adenosyl-L-methionine = 5-methyluridine(341) in tmRNA + S-adenosyl-L-homocysteine + H(+). In terms of biological role, dual-specificity methyltransferase that catalyzes the formation of 5-methyluridine at position 54 (m5U54) in all tRNAs, and that of position 341 (m5U341) in tmRNA (transfer-mRNA). The chain is tRNA/tmRNA (uracil-C(5))-methyltransferase from Pseudomonas fluorescens (strain SBW25).